The following is a 363-amino-acid chain: Phosphoserine aminotransferase (363 aa).

R42 serves as a coordination point for L-glutamate. Pyridoxal 5'-phosphate is bound by residues 76–77 (GR), W102, T156, D175, and Q198. K199 bears the N6-(pyridoxal phosphate)lysine mark. 240-241 (NT) contacts pyridoxal 5'-phosphate.

The protein belongs to the class-V pyridoxal-phosphate-dependent aminotransferase family. SerC subfamily. In terms of assembly, homodimer. Requires pyridoxal 5'-phosphate as cofactor.

The protein resides in the cytoplasm. The catalysed reaction is O-phospho-L-serine + 2-oxoglutarate = 3-phosphooxypyruvate + L-glutamate. It carries out the reaction 4-(phosphooxy)-L-threonine + 2-oxoglutarate = (R)-3-hydroxy-2-oxo-4-phosphooxybutanoate + L-glutamate. The protein operates within amino-acid biosynthesis; L-serine biosynthesis; L-serine from 3-phospho-D-glycerate: step 2/3. It functions in the pathway cofactor biosynthesis; pyridoxine 5'-phosphate biosynthesis; pyridoxine 5'-phosphate from D-erythrose 4-phosphate: step 3/5. Catalyzes the reversible conversion of 3-phosphohydroxypyruvate to phosphoserine and of 3-hydroxy-2-oxo-4-phosphonooxybutanoate to phosphohydroxythreonine. The chain is Phosphoserine aminotransferase from Shewanella sp. (strain ANA-3).